The sequence spans 329 residues: GTP 3',8-cyclase (329 aa).

The Radical SAM core domain maps to 8-234 (AFARKFFYLR…QIRQRSDGPA (227 aa)). Residue arginine 17 participates in GTP binding. Cysteine 24 and cysteine 28 together coordinate [4Fe-4S] cluster. Tyrosine 30 is a binding site for S-adenosyl-L-methionine. Cysteine 31 is a binding site for [4Fe-4S] cluster. Arginine 68 serves as a coordination point for GTP. Glycine 72 provides a ligand contact to S-adenosyl-L-methionine. Threonine 99 contributes to the GTP binding site. Serine 123 provides a ligand contact to S-adenosyl-L-methionine. Position 160 (lysine 160) interacts with GTP. Methionine 194 is a binding site for S-adenosyl-L-methionine. [4Fe-4S] cluster-binding residues include cysteine 257 and cysteine 260. 262–264 (RLR) is a binding site for GTP. Cysteine 274 lines the [4Fe-4S] cluster pocket.

This sequence belongs to the radical SAM superfamily. MoaA family. Monomer and homodimer. It depends on [4Fe-4S] cluster as a cofactor.

The enzyme catalyses GTP + AH2 + S-adenosyl-L-methionine = (8S)-3',8-cyclo-7,8-dihydroguanosine 5'-triphosphate + 5'-deoxyadenosine + L-methionine + A + H(+). Its pathway is cofactor biosynthesis; molybdopterin biosynthesis. Its function is as follows. Catalyzes the cyclization of GTP to (8S)-3',8-cyclo-7,8-dihydroguanosine 5'-triphosphate. This is GTP 3',8-cyclase from Klebsiella pneumoniae (strain 342).